Consider the following 425-residue polypeptide: Neuromedin-U receptor 1 (425 aa).

The Extracellular portion of the chain corresponds to 1–59 (MTPPCLNCSFFPGQLSPNASTGLLSCNDSEFKEHFDLEDLNLTHEDLRLKYLGPQQVKQ). Asn-41 is a glycosylation site (N-linked (GlcNAc...) asparagine). A helical membrane pass occupies residues 60 to 80 (FLPICVTYLLIFVVGTLGNGL). Over 81–96 (TCTVILRQKAMHTPTN) the chain is Cytoplasmic. A helical transmembrane segment spans residues 97–117 (FYLFSLAVSDLLVLLVGLPLE). Over 118-137 (LYEMQHNYPFQLGAGGCYFR) the chain is Extracellular. An intrachain disulfide couples Cys-134 to Cys-219. Residues 138–158 (ILLLETVCLASVLNVTALSVE) form a helical membrane-spanning segment. Topologically, residues 159–181 (RYVAVVHPLQAKSVMTRTHVRRM) are cytoplasmic. Residues 182–202 (LGAIWVFAILFSLPNTSLHGL) form a helical membrane-spanning segment. Residues 203–235 (SPLYVPCRGPVPDSVTCTLVRPQFFYKLVIQTT) lie on the Extracellular side of the membrane. A helical membrane pass occupies residues 236–256 (ILLFFCLPMVTISVLYLLIGL). Residues 257–294 (RLRRERILLQEEVKGRISAAARQASHRSIQLRDRERRQ) lie on the Cytoplasmic side of the membrane. Residues 295-315 (VTKMLIALVIVFGTCWVPFHA) form a helical membrane-spanning segment. Residues 316–331 (DRLMWSMVSHWTDGLR) lie on the Extracellular side of the membrane. The chain crosses the membrane as a helical span at residues 332-352 (LAFQSVHLASGVFLYLGSAAN). Residues 353–425 (PVLYNLMSTR…GCEQETDPPE (73 aa)) lie on the Cytoplasmic side of the membrane. The disordered stretch occupies residues 406–425 (DVPLAENRDPGCEQETDPPE).

It belongs to the G-protein coupled receptor 1 family. In terms of tissue distribution, highly expressed in the small intestine and lung. Low expression in the central nervous system.

It is found in the cell membrane. Functionally, receptor for the neuromedin-U and neuromedin-S neuropeptides. This Rattus norvegicus (Rat) protein is Neuromedin-U receptor 1 (Nmur1).